A 445-amino-acid chain; its full sequence is Phosphoglucosamine mutase (445 aa).

Ser-102 serves as the catalytic Phosphoserine intermediate. Mg(2+)-binding residues include Ser-102, Asp-240, Asp-242, and Asp-244. Ser-102 carries the phosphoserine modification.

It belongs to the phosphohexose mutase family. The cofactor is Mg(2+). Post-translationally, activated by phosphorylation.

The catalysed reaction is alpha-D-glucosamine 1-phosphate = D-glucosamine 6-phosphate. Functionally, catalyzes the conversion of glucosamine-6-phosphate to glucosamine-1-phosphate. The protein is Phosphoglucosamine mutase of Mycolicibacterium gilvum (strain PYR-GCK) (Mycobacterium gilvum (strain PYR-GCK)).